Here is a 957-residue protein sequence, read N- to C-terminus: Glycine dehydrogenase (decarboxylating) 2 (957 aa).

An N6-(pyridoxal phosphate)lysine modification is found at Lys707.

It belongs to the GcvP family. As to quaternary structure, the glycine cleavage system is composed of four proteins: P, T, L and H. Pyridoxal 5'-phosphate serves as cofactor.

The enzyme catalyses N(6)-[(R)-lipoyl]-L-lysyl-[glycine-cleavage complex H protein] + glycine + H(+) = N(6)-[(R)-S(8)-aminomethyldihydrolipoyl]-L-lysyl-[glycine-cleavage complex H protein] + CO2. Its function is as follows. The glycine cleavage system catalyzes the degradation of glycine. The P protein binds the alpha-amino group of glycine through its pyridoxal phosphate cofactor; CO(2) is released and the remaining methylamine moiety is then transferred to the lipoamide cofactor of the H protein. The polypeptide is Glycine dehydrogenase (decarboxylating) 2 (Pseudomonas fluorescens (strain Pf0-1)).